Here is a 367-residue protein sequence, read N- to C-terminus: tRNA/tmRNA (uracil-C(5))-methyltransferase (367 aa).

Residues Gln-190, Tyr-218, Asn-223, Glu-239, and Asp-299 each coordinate S-adenosyl-L-methionine. Cys-324 acts as the Nucleophile in catalysis. Catalysis depends on Glu-358, which acts as the Proton acceptor.

This sequence belongs to the class I-like SAM-binding methyltransferase superfamily. RNA M5U methyltransferase family. TrmA subfamily.

The enzyme catalyses uridine(54) in tRNA + S-adenosyl-L-methionine = 5-methyluridine(54) in tRNA + S-adenosyl-L-homocysteine + H(+). It carries out the reaction uridine(341) in tmRNA + S-adenosyl-L-methionine = 5-methyluridine(341) in tmRNA + S-adenosyl-L-homocysteine + H(+). In terms of biological role, dual-specificity methyltransferase that catalyzes the formation of 5-methyluridine at position 54 (m5U54) in all tRNAs, and that of position 341 (m5U341) in tmRNA (transfer-mRNA). The chain is tRNA/tmRNA (uracil-C(5))-methyltransferase from Musicola paradisiaca (strain Ech703) (Dickeya paradisiaca).